The chain runs to 179 residues: Natural killer cells antigen CD94 (179 aa).

The Cytoplasmic portion of the chain corresponds to 1–10 (MAVFKTTLWR). Residues 11–31 (LISGTLGIICLSLMSTLGILL) form a helical; Signal-anchor for type II membrane protein membrane-spanning segment. At 32 to 179 (KNSFTKLSIE…NRYICKQQLI (148 aa)) the chain is on the extracellular side. 2 cysteine pairs are disulfide-bonded: Cys-58/Cys-70 and Cys-61/Cys-72. A C-type lectin domain is found at 68–175 (YRCNCYFISS…CEDKNRYICK (108 aa)). 2 N-linked (GlcNAc...) asparagine glycosylation sites follow: Asn-83 and Asn-132. 2 cysteine pairs are disulfide-bonded: Cys-89-Cys-174 and Cys-152-Cys-166.

As to quaternary structure, can form disulfide-bonded heterodimer with NKG2 family members KLRC1 and KLRC2. KLRD1-KLRC1 heterodimer interacts with peptide-bound HLA-E-B2M heterotrimeric complex. KLRD1 plays a prominent role in directly interacting with HLA-E. KLRD1-KLRC1 interacts with much higher affinity with peptide-bound HLA-E-B2M than KLRD1-KLRC2. Interacts with the adapter protein TYROBP/DAP12; this interaction is required for cell surface expression and cell activation. Expressed in NK cell subsets (at protein level). Expressed in memory/effector CD8-positive alpha-beta T cell subsets (at protein level). Expressed in melanoma-specific cytotoxic T cell clones (at protein level). Expressed in terminally differentiated cytotoxic gamma-delta T cells (at protein level). KLRD1-KLRC1 and KLRD1-KLRC2 are differentially expressed in NK and T cell populations, with only minor subsets expressing both receptor complexes (at protein level).

The protein localises to the cell membrane. Its function is as follows. Immune receptor involved in self-nonself discrimination. In complex with KLRC1 or KLRC2 on cytotoxic and regulatory lymphocyte subsets, recognizes non-classical major histocompatibility (MHC) class Ib molecule HLA-E loaded with self-peptides derived from the signal sequence of classical MHC class Ia and non-classical MHC class Ib molecules. Enables cytotoxic cells to monitor the expression of MHC class I molecules in healthy cells and to tolerate self. Primarily functions as a ligand binding subunit as it lacks the capacity to signal. KLRD1-KLRC1 acts as an immune inhibitory receptor. Key inhibitory receptor on natural killer (NK) cells that regulates their activation and effector functions. Dominantly counteracts T cell receptor signaling on a subset of memory/effector CD8-positive T cells as part of an antigen-driven response to avoid autoimmunity. On intraepithelial CD8-positive gamma-delta regulatory T cells triggers TGFB1 secretion, which in turn limits the cytotoxic programming of intraepithelial CD8-positive alpha-beta T cells, distinguishing harmless from pathogenic antigens. In HLA-E-rich tumor microenvironment, acts as an immune inhibitory checkpoint and may contribute to progressive loss of effector functions of NK cells and tumor-specific T cells, a state known as cell exhaustion. Upon HLA-E-peptide binding, transmits intracellular signals through KLRC1 immunoreceptor tyrosine-based inhibition motifs (ITIMs) by recruiting INPP5D/SHIP-1 and INPPL1/SHIP-2 tyrosine phosphatases to ITIMs, and ultimately opposing signals transmitted by activating receptors through dephosphorylation of proximal signaling molecules. Functionally, KLRD1-KLRC2 acts as an immune activating receptor. On cytotoxic lymphocyte subsets recognizes HLA-E loaded with signal sequence-derived peptides from non-classical MHC class Ib HLA-G molecules, likely playing a role in the generation and effector functions of adaptive NK cells and in maternal-fetal tolerance during pregnancy. Regulates the effector functions of terminally differentiated cytotoxic lymphocyte subsets, and in particular may play a role in adaptive NK cell response to viral infection. Upon HLA-E-peptide binding, transmits intracellular signals via the adapter protein TYROBP/DAP12, triggering the phosphorylation of proximal signaling molecules and cell activation. In terms of biological role, (Microbial infection) Viruses like human cytomegalovirus have evolved an escape mechanism whereby virus-induced down-regulation of host MHC class I molecules is coupled to the binding of viral peptides to HLA-E, restoring HLA-E expression and inducing HLA-E-dependent NK cell immune tolerance to infected cells. Recognizes HLA-E in complex with human cytomegalovirus UL40-derived peptide (VMAPRTLIL) and inhibits NK cell cytotoxicity. Its function is as follows. (Microbial infection) May recognize HLA-E in complex with HIV-1 gag/Capsid protein p24-derived peptide (AISPRTLNA) on infected cells and may inhibit NK cell cytotoxicity, a mechanism that allows HIV-1 to escape immune recognition. (Microbial infection) Upon SARS-CoV-2 infection, may contribute to functional exhaustion of cytotoxic NK cells and CD8-positive T cells. On NK cells, may recognize HLA-E in complex with SARS-CoV-2 S/Spike protein S1-derived peptide (LQPRTFLL) expressed on the surface of lung epithelial cells, inducing NK cell exhaustion and dampening antiviral immune surveillance. This is Natural killer cells antigen CD94 (KLRD1) from Homo sapiens (Human).